Consider the following 1040-residue polypeptide: Vitamin B12-dependent ribonucleotide reductase (1040 aa).

Substrate is bound by residues serine 169, 213-214 (AC), glycine 242, 420-424 (NPCSE), and 604-608 (PTGTI). The cysteines at positions 214 and 433 are disulfide-linked. The active-site Proton acceptor is the asparagine 420. Cysteine 422 acts as the Cysteine radical intermediate in catalysis. Glutamate 424 functions as the Proton acceptor in the catalytic mechanism. Disordered regions lie at residues 909 to 932 (SAEGAAKTGGNGPDLTTAPAGATA) and 969 to 988 (GSATNGHSNGQSAGGSSDGA). The segment covering 969 to 979 (GSATNGHSNGQ) has biased composition (polar residues).

The protein belongs to the ribonucleoside diphosphate reductase class-2 family. Adenosylcob(III)alamin serves as cofactor.

It catalyses the reaction a 2'-deoxyribonucleoside 5'-diphosphate + [thioredoxin]-disulfide + H2O = a ribonucleoside 5'-diphosphate + [thioredoxin]-dithiol. Functionally, catalyzes the reduction of ribonucleotides to deoxyribonucleotides. May function to provide a pool of deoxyribonucleotide precursors for DNA repair during oxygen limitation and/or for immediate growth after restoration of oxygen. This chain is Vitamin B12-dependent ribonucleotide reductase (nrdJ), found in Rhodopirellula baltica (strain DSM 10527 / NCIMB 13988 / SH1).